Consider the following 1051-residue polypeptide: Lateral signaling target protein 2 homolog (1051 aa).

Disordered regions lie at residues 305-440, 516-552, 566-703, and 837-968; these read PLGS…DEDL, GSNA…PSTS, HLPS…NASS, and IDLA…DGKA. Low complexity predominate over residues 319-358; the sequence is NNTSSSTSNNNNNNNNNSSSSSSSSSGSGSNTAKTSTSST. Residues 360-370 are compositionally biased toward basic and acidic residues; sequence KAVERLVDHRN. Positions 371–391 are enriched in polar residues; sequence NNSSTVAGATQPSTARSPSML. Low complexity-rich tracts occupy residues 392–401 and 409–428; these read SLSAGSTPTA and PSHS…NPPA. Residues 518-528 are compositionally biased toward polar residues; that stretch reads NAATERQQQQQ. 2 stretches are compositionally biased toward low complexity: residues 533-549 and 568-582; these read LQPG…QDEP and PSSS…SSNQ. 2 positions are modified to phosphoserine: Ser-569 and Ser-570. Positions 583–596 are enriched in polar residues; that stretch reads QTTIKTPNGNQSMP. The segment covering 597 to 606 has biased composition (low complexity); sequence NSSSSSSNHN. Basic residues-rich tracts occupy residues 607-637 and 650-672; these read NNRH…HPHH and HHHH…ARKR. Residues 692–703 are compositionally biased toward polar residues; sequence TPGSADTSNASS. Low complexity predominate over residues 840 to 852; sequence ASGNNNGNSNAAA. Phosphoserine is present on Ser-861. 2 stretches are compositionally biased toward low complexity: residues 879-924 and 937-960; these read QQQQ…SPIS and SSIG…MSPP. The FYVE-type zinc finger occupies 965 to 1025; it reads DGKAPRCMSC…VCRECYVREV (61 aa). Residues Cys-971, Cys-974, Cys-987, Cys-990, Cys-995, Cys-998, Cys-1017, and Cys-1020 each coordinate Zn(2+). Residues 1028-1051 form a disordered region; that stretch reads SRQAPAQPSQAHGQASRPQAASAS.

This sequence belongs to the lst-2 family.

Its function is as follows. Negative regulator of epidermal growth factor receptor (EGFR) signaling. This chain is Lateral signaling target protein 2 homolog, found in Drosophila mojavensis (Fruit fly).